A 205-amino-acid chain; its full sequence is Probable molybdenum cofactor guanylyltransferase (205 aa).

GTP contacts are provided by residues 9–11, Lys-21, Asp-66, and Asp-95; that span reads LAG. Asp-95 contributes to the Mg(2+) binding site.

It belongs to the MobA family. Requires Mg(2+) as cofactor.

Its subcellular location is the cytoplasm. The enzyme catalyses Mo-molybdopterin + GTP + H(+) = Mo-molybdopterin guanine dinucleotide + diphosphate. Functionally, transfers a GMP moiety from GTP to Mo-molybdopterin (Mo-MPT) cofactor (Moco or molybdenum cofactor) to form Mo-molybdopterin guanine dinucleotide (Mo-MGD) cofactor. The polypeptide is Probable molybdenum cofactor guanylyltransferase (Pelotomaculum thermopropionicum (strain DSM 13744 / JCM 10971 / SI)).